Consider the following 133-residue polypeptide: uncharacterized protein (133 aa).

A signal peptide spans 1-23 (MSRKIIPALTIFFGPILILTAIT). Residues 82–133 (ESIKNQNSLNKEKQQQQQQQQQQQQQQQQQQQQQQKPNTPPTPLTTPSTPKK) are disordered. Positions 96–118 (QQQQQQQQQQQQQQQQQQQQQKP) are enriched in low complexity.

It localises to the secreted. This is an uncharacterized protein from Dictyostelium discoideum (Social amoeba).